The sequence spans 129 residues: Glycine cleavage system H protein (129 aa).

In terms of domain architecture, Lipoyl-binding spans 24–106 (SYTVGITEHA…YGEGWFFRVM (83 aa)). Lys65 bears the N6-lipoyllysine mark.

The protein belongs to the GcvH family. The glycine cleavage system is composed of four proteins: P, T, L and H. (R)-lipoate serves as cofactor.

The glycine cleavage system catalyzes the degradation of glycine. The H protein shuttles the methylamine group of glycine from the P protein to the T protein. The polypeptide is Glycine cleavage system H protein (Shewanella sp. (strain MR-7)).